The primary structure comprises 130 residues: Small ribosomal subunit protein uS11c (130 aa).

The protein belongs to the universal ribosomal protein uS11 family. As to quaternary structure, part of the 30S ribosomal subunit.

It is found in the plastid. Its subcellular location is the chloroplast. This is Small ribosomal subunit protein uS11c from Phaeodactylum tricornutum (strain CCAP 1055/1).